Reading from the N-terminus, the 1771-residue chain is Fatty acid synthase alpha subunit pkiB (1771 aa).

Residues 108–130 (SQPTQPQFEPTSPSHLTKRSPSP) show a composition bias toward polar residues. The segment at 108–133 (SQPTQPQFEPTSPSHLTKRSPSPSKA) is disordered. The region spanning 143-221 (ELTLQAGHVI…ESFQPEFSGI (79 aa)) is the Carrier domain. Ser181 carries the post-translational modification O-(pantetheine 4'-phosphoryl)serine. The tract at residues 575-771 (HKAVLVTGAG…CGAVIGWTRG (197 aa)) is beta-ketoacyl reductase. Positions 1011-1531 (KELLHEVAVE…QKGAINIMVS (521 aa)) constitute a Ketosynthase family 3 (KS3) domain. Residues Cys1197, His1416, and His1457 each act as for beta-ketoacyl synthase activity in the active site. Asp1650, Val1651, and Glu1652 together coordinate Mg(2+). Acetyl-CoA contacts are provided by residues 1650 to 1652 (DVE), Tyr1676, Ser1686, 1695 to 1705 (EAAFKSLQTTS), 1719 to 1722 (EVGG), and 1753 to 1755 (ISH). 2 residues coordinate Mg(2+): Ser1754 and His1755.

This sequence belongs to the thiolase-like superfamily. Fungal fatty acid synthetase subunit alpha family. In terms of assembly, [Alpha(6)beta(6)] hexamers of two multifunctional subunits (alpha and beta).

The catalysed reaction is acetyl-CoA + n malonyl-CoA + 2n NADPH + 4n H(+) = a long-chain-acyl-CoA + n CoA + n CO2 + 2n NADP(+).. It carries out the reaction a fatty acyl-[ACP] + malonyl-[ACP] + H(+) = a 3-oxoacyl-[ACP] + holo-[ACP] + CO2. The enzyme catalyses a (3R)-hydroxyacyl-[ACP] + NADP(+) = a 3-oxoacyl-[ACP] + NADPH + H(+). Its pathway is secondary metabolite biosynthesis. Its function is as follows. Fatty acid synthase alpha subunit; part of the pki gene cluster that mediates the biosynthesis of 2,4-dihydroxy-3-methyl-6-(2-oxoundecyl)benzaldehyde. The first step in the pathway is the generation of the decanoyl starter unit by the FAS composed of subunits pkiB and pkiC, which is then transferred directly from the FAS to the SAT domain of the non-reducing polyketide synthase pkiA. PkiA condenses the decanoyyl starter unit with 4 malonyl-CoA units and performs one methylation step to yield 2,4-dihydroxy-3-methyl-6-(2-oxoundecyl)benzaldehyde. The sequence is that of Fatty acid synthase alpha subunit pkiB from Emericella nidulans (strain FGSC A4 / ATCC 38163 / CBS 112.46 / NRRL 194 / M139) (Aspergillus nidulans).